The chain runs to 111 residues: Large ribosomal subunit protein uL22 (111 aa).

This sequence belongs to the universal ribosomal protein uL22 family. Part of the 50S ribosomal subunit.

In terms of biological role, this protein binds specifically to 23S rRNA; its binding is stimulated by other ribosomal proteins, e.g. L4, L17, and L20. It is important during the early stages of 50S assembly. It makes multiple contacts with different domains of the 23S rRNA in the assembled 50S subunit and ribosome. Its function is as follows. The globular domain of the protein is located near the polypeptide exit tunnel on the outside of the subunit, while an extended beta-hairpin is found that lines the wall of the exit tunnel in the center of the 70S ribosome. The polypeptide is Large ribosomal subunit protein uL22 (Polynucleobacter necessarius subsp. necessarius (strain STIR1)).